A 179-amino-acid chain; its full sequence is Large ribosomal subunit protein uL5 (179 aa).

The protein belongs to the universal ribosomal protein uL5 family. Part of the 50S ribosomal subunit; part of the 5S rRNA/L5/L18/L25 subcomplex. Contacts the 5S rRNA and the P site tRNA. Forms a bridge to the 30S subunit in the 70S ribosome.

Functionally, this is one of the proteins that bind and probably mediate the attachment of the 5S RNA into the large ribosomal subunit, where it forms part of the central protuberance. In the 70S ribosome it contacts protein S13 of the 30S subunit (bridge B1b), connecting the 2 subunits; this bridge is implicated in subunit movement. Contacts the P site tRNA; the 5S rRNA and some of its associated proteins might help stabilize positioning of ribosome-bound tRNAs. The protein is Large ribosomal subunit protein uL5 of Prochlorococcus marinus (strain NATL1A).